Here is a 347-residue protein sequence, read N- to C-terminus: Phosphoribosylformylglycinamidine cyclo-ligase (347 aa).

This sequence belongs to the AIR synthase family.

It is found in the cytoplasm. The catalysed reaction is 2-formamido-N(1)-(5-O-phospho-beta-D-ribosyl)acetamidine + ATP = 5-amino-1-(5-phospho-beta-D-ribosyl)imidazole + ADP + phosphate + H(+). It functions in the pathway purine metabolism; IMP biosynthesis via de novo pathway; 5-amino-1-(5-phospho-D-ribosyl)imidazole from N(2)-formyl-N(1)-(5-phospho-D-ribosyl)glycinamide: step 2/2. In Alkaliphilus metalliredigens (strain QYMF), this protein is Phosphoribosylformylglycinamidine cyclo-ligase.